The chain runs to 1889 residues: Protein TIC 214 (1889 aa).

6 consecutive transmembrane segments (helical) span residues 11–31 (LISL…YYGF), 67–87 (FIAG…HLAL), 88–108 (GKPH…FFWN), 127–147 (LSIQ…HFIL), 175–195 (VGWL…LVWI), and 224–244 (IFSI…PSPI). Acidic residues predominate over residues 255–265 (PEEVGESEEER). Disordered stretches follow at residues 255-303 (PEEV…PSKE) and 1610-1633 (SNQE…KKKQ). Residues 279–293 (NQKQGTEENTSSSLF) are compositionally biased toward polar residues.

The protein belongs to the TIC214 family. Part of the Tic complex.

The protein localises to the plastid. Its subcellular location is the chloroplast inner membrane. Its function is as follows. Involved in protein precursor import into chloroplasts. May be part of an intermediate translocation complex acting as a protein-conducting channel at the inner envelope. This is Protein TIC 214 from Gossypium barbadense (Sea Island cotton).